The chain runs to 268 residues: Interleukin-1 beta (268 aa).

A propeptide spanning residues 1–115 is cleaved from the precursor; sequence MAAVPDTSDM…DNWDEGYVCD (115 aa).

This sequence belongs to the IL-1 family. Monomer. In its precursor form, weakly interacts with full-length MEFV; the mature cytokine does not interact at all. Interacts with integrins ITGAV:ITGBV and ITGA5:ITGB1; integrin-binding is required for IL1B signaling. Interacts with cargo receptor TMED10; the interaction is direct and is required for the secretion of IL1B mature form. Interacts with HSP90AB1; the interaction facilitates cargo translocation into the ERGIC. Interacts with HSP90B1; the interaction facilitates cargo translocation into the ERGIC.

It localises to the cytoplasm. The protein localises to the cytosol. Its subcellular location is the secreted. It is found in the lysosome. The protein resides in the extracellular exosome. Its function is as follows. Potent pro-inflammatory cytokine. Initially discovered as the major endogenous pyrogen, induces prostaglandin synthesis, neutrophil influx and activation, T-cell activation and cytokine production, B-cell activation and antibody production, and fibroblast proliferation and collagen production. Promotes Th17 differentiation of T-cells. Synergizes with IL12/interleukin-12 to induce IFNG synthesis from T-helper 1 (Th1) cells. Plays a role in angiogenesis by inducing VEGF production synergistically with TNF and IL6. Involved in transduction of inflammation downstream of pyroptosis: its mature form is specifically released in the extracellular milieu by passing through the gasdermin-D (GSDMD) pore. The protein is Interleukin-1 beta (IL1B) of Equus caballus (Horse).